Here is a 21-residue protein sequence, read N- to C-terminus: Cutinase 2 (21 aa).

It belongs to the cutinase family.

It is found in the secreted. It catalyses the reaction cutin + H2O = cutin monomers.. With respect to regulation, inhibited by diisopropyl fluorophosphate (DFP). In terms of biological role, catalyzes the hydrolysis of complex carboxylic polyesters found in the cell wall of plants. Degrades cutin, a macromolecule that forms the structure of the plant cuticle. Allows pathogenic fungi to penetrate through the cuticular barrier into the host plant during the initial stage of fungal infection. This chain is Cutinase 2, found in Colletotrichum gloeosporioides (Anthracnose fungus).